The primary structure comprises 505 residues: Lysine--tRNA ligase (505 aa).

2 residues coordinate Mg(2+): glutamate 415 and glutamate 422.

Belongs to the class-II aminoacyl-tRNA synthetase family. Homodimer. Requires Mg(2+) as cofactor.

The protein localises to the cytoplasm. The catalysed reaction is tRNA(Lys) + L-lysine + ATP = L-lysyl-tRNA(Lys) + AMP + diphosphate. The sequence is that of Lysine--tRNA ligase from Shigella dysenteriae serotype 1 (strain Sd197).